Consider the following 187-residue polypeptide: Putative manganese efflux pump MntP (187 aa).

The next 6 membrane-spanning stretches (helical) occupy residues 3–23 (MSAT…ASIG), 41–61 (LIFG…GFFA), 62–82 (SQYI…ILGG), 107–129 (LLVC…LAFL), 143–163 (ATMI…PILG), and 166–186 (AEII…YEHL).

This sequence belongs to the MntP (TC 9.B.29) family.

The protein localises to the cell inner membrane. Its function is as follows. Probably functions as a manganese efflux pump. This is Putative manganese efflux pump MntP from Pectobacterium atrosepticum (strain SCRI 1043 / ATCC BAA-672) (Erwinia carotovora subsp. atroseptica).